Here is an 888-residue protein sequence, read N- to C-terminus: Glutamate receptor 3 (888 aa).

The N-terminal stretch at 1–22 (MGQSVLRAVFFLVLGLLGHSHG) is a signal peptide. Residues 23-546 (GFPNTISIGG…GVFSFLDPLA (524 aa)) lie on the Extracellular side of the membrane. N-linked (GlcNAc...) asparagine glycans are attached at residues N57, N260, N374, N409, and N416. C85 and C334 form a disulfide bridge. L-glutamate-binding residues include P502, T504, and R509. A helical transmembrane segment spans residues 547–567 (YEIWMCIVFAYIGVSVVLFLV). At 568 to 596 (SRFSPYEWHLEDNNEEPRDPQSPPDPPNE) the chain is on the cytoplasmic side. Positions 597–612 (FGIFNSLWFSLGAFMQ) form an intramembrane region, helical; Pore-forming. Residues 613 to 615 (QGC) lie within the membrane without spanning it. C615 is lipidated: S-palmitoyl cysteine. At 616–621 (DISPRS) the chain is on the cytoplasmic side. Residues 622 to 642 (LSGRIVGGVWWFFTLIIISSY) traverse the membrane as a helical segment. Residues 643 to 817 (TANLAAFLTV…DKTSALSLSN (175 aa)) are Extracellular-facing. The L-glutamate site is built by S680, T681, and E731. A disulfide bond links C744 and C799. A helical membrane pass occupies residues 818-838 (VAGVFYILVGGLGLAMMVALI). At 839 to 888 (EFCYKSRAESKRMKLTKNTQNFKPAPATNTQNYATYREGYNVYGTESVKI) the chain is on the cytoplasmic side. C841 is lipidated: S-palmitoyl cysteine. A phosphotyrosine mark is found at Y871 and Y881.

The protein belongs to the glutamate-gated ion channel (TC 1.A.10.1) family. GRIA3 subfamily. As to quaternary structure, homotetramer or heterotetramer of pore-forming glutamate receptor subunits. Tetramers may be formed by the dimerization of dimers. Interacts with PICK1, GRIP1 and GRIP2. Found in a complex with GRIA1, GRIA2, GRIA4, CNIH2, CNIH3, CACNG2, CACNG3, CACNG4, CACNG5, CACNG7 and CACNG8. Interacts with CACNG5. Found in a complex with GRIA1, GRIA2, GRIA4, DLG4, CACNG8 and CNIH2.

Its subcellular location is the cell membrane. The protein localises to the postsynaptic cell membrane. It is found in the postsynaptic density membrane. The catalysed reaction is Ca(2+)(in) = Ca(2+)(out). In terms of biological role, ionotropic glutamate receptor that functions as a ligand-gated cation channel, gated by L-glutamate and glutamatergic agonists such as alpha-amino-3-hydroxy-5-methyl-4-isoxazolepropionic acid (AMPA), quisqualic acid, and kainic acid. L-glutamate acts as an excitatory neurotransmitter at many synapses in the central nervous system and plays an important role in fast excitatory synaptic transmission by inducing long-term potentiation. Binding of the excitatory neurotransmitter L-glutamate induces a conformation change, leading to the opening of the cation channel, and thereby converts the chemical signal to an electrical impulse upon entry of calcium. The receptor then desensitizes rapidly and enters a transient inactive state, characterized by the presence of bound agonist. In the presence of CACNG8, shows resensitization which is characterized by a delayed accumulation of current flux upon continued application of glutamate. This is Glutamate receptor 3 from Mus musculus (Mouse).